Consider the following 344-residue polypeptide: Dihydroorotase (344 aa).

Residues His14 and His16 each coordinate Zn(2+). Residues 16-18 and Asn42 each bind substrate; that span reads HLR. Positions 100, 137, and 175 each coordinate Zn(2+). At Lys100 the chain carries N6-carboxylysine. His137 serves as a coordination point for substrate. Leu220 is a binding site for substrate. Asp248 provides a ligand contact to Zn(2+). The active site involves Asp248. His252 and Ala264 together coordinate substrate.

This sequence belongs to the metallo-dependent hydrolases superfamily. DHOase family. Class II DHOase subfamily. In terms of assembly, homodimer. Requires Zn(2+) as cofactor.

The enzyme catalyses (S)-dihydroorotate + H2O = N-carbamoyl-L-aspartate + H(+). The protein operates within pyrimidine metabolism; UMP biosynthesis via de novo pathway; (S)-dihydroorotate from bicarbonate: step 3/3. Its function is as follows. Catalyzes the reversible cyclization of carbamoyl aspartate to dihydroorotate. This is Dihydroorotase from Cupriavidus metallidurans (strain ATCC 43123 / DSM 2839 / NBRC 102507 / CH34) (Ralstonia metallidurans).